Consider the following 85-residue polypeptide: Small ribosomal subunit protein uS17 (85 aa).

Belongs to the universal ribosomal protein uS17 family. Part of the 30S ribosomal subunit.

One of the primary rRNA binding proteins, it binds specifically to the 5'-end of 16S ribosomal RNA. The protein is Small ribosomal subunit protein uS17 of Pasteurella multocida (strain Pm70).